The following is a 184-amino-acid chain: ATP synthase subunit b, chloroplastic (184 aa).

Residues 27–49 traverse the membrane as a helical segment; it reads LATNPINLSVVFGVLIFFGKGVL.

The protein belongs to the ATPase B chain family. In terms of assembly, F-type ATPases have 2 components, F(1) - the catalytic core - and F(0) - the membrane proton channel. F(1) has five subunits: alpha(3), beta(3), gamma(1), delta(1), epsilon(1). F(0) has four main subunits: a(1), b(1), b'(1) and c(10-14). The alpha and beta chains form an alternating ring which encloses part of the gamma chain. F(1) is attached to F(0) by a central stalk formed by the gamma and epsilon chains, while a peripheral stalk is formed by the delta, b and b' chains.

Its subcellular location is the plastid. The protein resides in the chloroplast thylakoid membrane. Functionally, f(1)F(0) ATP synthase produces ATP from ADP in the presence of a proton or sodium gradient. F-type ATPases consist of two structural domains, F(1) containing the extramembraneous catalytic core and F(0) containing the membrane proton channel, linked together by a central stalk and a peripheral stalk. During catalysis, ATP synthesis in the catalytic domain of F(1) is coupled via a rotary mechanism of the central stalk subunits to proton translocation. In terms of biological role, component of the F(0) channel, it forms part of the peripheral stalk, linking F(1) to F(0). The sequence is that of ATP synthase subunit b, chloroplastic from Lobularia maritima (Sweet alyssum).